A 468-amino-acid polypeptide reads, in one-letter code: Zinc finger protein mex-5 (468 aa).

Residues 1-19 are compositionally biased toward low complexity; it reads MKAASNSVSSAGGSVSPTT. A disordered region spans residues 1 to 32; that stretch reads MKAASNSVSSAGGSVSPTTTQPPLPPGQSSHP. Phosphothreonine; by mbk-2 is present on Thr-186. Residues 243-254 show a composition bias toward basic and acidic residues; sequence NHFHEHRGEKFG. Residues 243-269 form a disordered region; it reads NHFHEHRGEKFGRRGFPIPETDSQQPP. 2 consecutive C3H1-type zinc fingers follow at residues 270–299 and 314–344; these read NYKT…HGLK and KYKT…HPTD. The tract at residues 414-468 is disordered; sequence DLQAGGDYNQPESNEDDLPPHLRRNRRENPPMNKRRTSLSTKWTSEENLGLRGHY. The span at 451–460 shows a compositional bias: polar residues; it reads SLSTKWTSEE. Ser-458 carries the post-translational modification Phosphoserine.

Interacts (when phosphorylated on Thr-186) with plk-1 (via POLO box domain) and plk-2 (via POLO box domain). Post-translationally, phosphorylation on Ser-458 by par-1 promotes localization of the protein to the anterior cytoplasm of the zygote. Phosphorylation by mbk-1 appears to be required for subsequent phosphorylation by plk-1. Asymmetrically localized to the anterior of the zygote before mitotic division, then differentially distributed to the somatic blastomere precursor cells.

The protein resides in the cytoplasm. Functions with mex-6 to affect embryonic viability, establish soma germline asymmetry in embryos and establish plk-1, pie-1, mex-1, and pos-1 asymmetry in embryos. Also affects formation of intestinal cells. Binds to mRNA in vitro, and inhibits pgl-3-mediated P-granule formation, probably by competing with pgl-3 for binding to mRNA. Required for neg-1 expression in anterior blastomeres during embryogenesis. In Caenorhabditis elegans, this protein is Zinc finger protein mex-5.